A 493-amino-acid polypeptide reads, in one-letter code: 3-octaprenyl-4-hydroxybenzoate carboxy-lyase (493 aa).

Mn(2+) is bound at residue N172. Residues 175–177 (IYR), 189–191 (RWL), and 194–195 (RG) each bind prenylated FMN. Residue E238 coordinates Mn(2+). The active-site Proton donor is the D287.

The protein belongs to the UbiD family. Homohexamer. The cofactor is prenylated FMN. Requires Mn(2+) as cofactor.

It is found in the cell membrane. The catalysed reaction is a 4-hydroxy-3-(all-trans-polyprenyl)benzoate + H(+) = a 2-(all-trans-polyprenyl)phenol + CO2. It functions in the pathway cofactor biosynthesis; ubiquinone biosynthesis. In terms of biological role, catalyzes the decarboxylation of 3-octaprenyl-4-hydroxy benzoate to 2-octaprenylphenol, an intermediate step in ubiquinone biosynthesis. This Shewanella amazonensis (strain ATCC BAA-1098 / SB2B) protein is 3-octaprenyl-4-hydroxybenzoate carboxy-lyase.